A 61-amino-acid polypeptide reads, in one-letter code: Antimicrobial peptide 1 (61 aa).

The first 24 residues, 1–24 (LPVAFLKFAIVLILFIAMSAMIEA), serve as a signal peptide directing secretion. Pyrrolidone carboxylic acid is present on Gln25. 3 disulfide bridges follow: Cys26-Cys43, Cys33-Cys47, and Cys42-Cys58.

The protein belongs to the AMP family. In terms of assembly, homodimer. In terms of processing, three disulfide bonds are present. As to expression, found only in seeds.

The protein localises to the secreted. Functionally, possesses antifungal activity and is also active on two tested Gram-positive bacteria but is non-toxic for Gram-negative bacteria and cultured human cells. The polypeptide is Antimicrobial peptide 1 (AMP1) (Mirabilis jalapa (Garden four-o'clock)).